Here is a 212-residue protein sequence, read N- to C-terminus: ATP-dependent dethiobiotin synthetase BioD (212 aa).

ATP is bound at residue 13–18 (GIGKTV). Threonine 17 serves as a coordination point for Mg(2+). Lysine 33 is an active-site residue. Serine 37 contributes to the substrate binding site. Position 100 (glutamate 100) interacts with Mg(2+). ATP is bound by residues 100–103 (EGAG) and 184–186 (PRL).

It belongs to the dethiobiotin synthetase family. As to quaternary structure, homodimer. The cofactor is Mg(2+).

It localises to the cytoplasm. It catalyses the reaction (7R,8S)-7,8-diammoniononanoate + CO2 + ATP = (4R,5S)-dethiobiotin + ADP + phosphate + 3 H(+). It functions in the pathway cofactor biosynthesis; biotin biosynthesis; biotin from 7,8-diaminononanoate: step 1/2. Its function is as follows. Catalyzes a mechanistically unusual reaction, the ATP-dependent insertion of CO2 between the N7 and N8 nitrogen atoms of 7,8-diaminopelargonic acid (DAPA, also called 7,8-diammoniononanoate) to form a ureido ring. This is ATP-dependent dethiobiotin synthetase BioD from Rhodopseudomonas palustris (strain ATCC BAA-98 / CGA009).